Here is a 977-residue protein sequence, read N- to C-terminus: Short transient receptor potential channel 4 (977 aa).

Over 1 to 324 (MAQFYYKRNV…YDEFPGWRRR (324 aa)) the chain is Cytoplasmic. ANK repeat units lie at residues 29–60 (LSPSEKAYLNAVEKGDYASVKKSLEEAEIYFK), 71–93 (RTALLIAIENENLELIELLLSFN), 96–118 (VGDALLHAIRKEVVGAVELLLNH), and 141–165 (PDITPIILAAHTNNYEIIKLLVQKG). The Zn(2+) site is built by histidine 172, cysteine 176, cysteine 178, and cysteine 181. Residues 223–260 (LSWELQELSKVENEFKSEYEELSRQCKQFAKDLLDQTR) adopt a coiled-coil conformation. The discontinuously helical intramembrane region spans 325 to 359 (HWAVKMVTCFIIGLLFPVFSVCYLIAPKSPLGLFI). At 360–362 (RKP) the chain is on the cytoplasmic side. Residues 363–383 (FIKFICHTASYLTFLFLLLLA) traverse the membrane as a helical segment. The Extracellular portion of the chain corresponds to 384–403 (SQHIDRSDLNRQGPPPTIVE). The helical transmembrane segment at 404-418 (WMILPWVLGFIWGEI) threads the bilayer. The Ca(2+) site is built by glutamate 417, glutamine 420, asparagine 435, and aspartate 438. At 419–432 (KQMWDGGLQDYIHD) the chain is on the cytoplasmic side. Residues 433-453 (WWNLMDFVMNSLYLATISLKI) form a helical membrane-spanning segment. Residues 454-475 (VAFVKYSALNPRESWDMWHPTL) lie on the Extracellular side of the membrane. Residues 476–498 (VAEALFAIANIFSSLRLISLFTA) traverse the membrane as a helical segment. The Cytoplasmic segment spans residues 499–511 (NSHLGPLQISLGR). The helical transmembrane segment at 512–534 (MLLDILKFLFIYCLVLLAFANGL) threads the bilayer. Residues 535-599 (NQLYFYYEET…HEFTEFVGAT (65 aa)) are Extracellular-facing. Cysteine 549 and cysteine 554 are disulfide-bonded. The helical transmembrane segment at 600–620 (MFGTYNVISLVVLLNMLIAMM) threads the bilayer. The interval 615 to 977 (MLIAMMNNSY…THEDYVTTRL (363 aa)) is interaction with ITPR1, ITPR2 and ITPR3. The Cytoplasmic portion of the chain corresponds to 621 to 977 (NNSYQLIADH…THEDYVTTRL (357 aa)). The interval 762–790 (IQSANASKESSNSADSDEKSDSEGNSKDK) is disordered. The segment covering 764-775 (SANASKESSNSA) has biased composition (low complexity). Basic and acidic residues predominate over residues 777–788 (SDEKSDSEGNSK). Residues tyrosine 959 and tyrosine 972 each carry the phosphotyrosine; by FYN modification. Residues 975-977 (TRL) form a PDZ-binding domain region.

Belongs to the transient receptor (TC 1.A.4) family. STrpC subfamily. TRPC4 sub-subfamily. As to quaternary structure, homotetramer. Heterotetramer with TRPC1 and/or TRPC5. Forms a heteromeric ion channel with TRPC1, with a 1:3 TRPC1:TRPC4 stoichiometry. Interacts with TRPC4AP. Isoform alpha but not isoform beta interacts with ITPR1, ITPR2 and ITPR3. Interacts with (via PDZ-binding domain) with NHERF1. Interacts with MX1 and RNF24. Interacts (via CIRB domain) with SESTD1 (via spectrin 1 repeat). Interacts with CDH5 and CTNNB1. Interacts with SPTAN1 (via C-terminal spectrin repeats) and SPTBN5 (via C-terminus). Interacts (via protein 4.1-binding domain) with EPB41L2. Interacts with PLSCR1. Phosphorylation modulates TRPC channel function by regulating the level of TRPC4 at the cell surface and by increasing the association with NHERF1. As to expression, strongly expressed in placenta. Expressed at lower levels in heart, pancreas, kidney and brain. Expressed in endothelial cells. Isoform alpha was found to be the predominant isoform. Isoform beta was not found in pancreas and brain.

The protein localises to the cell membrane. The enzyme catalyses Ca(2+)(in) = Ca(2+)(out). It catalyses the reaction Na(+)(in) = Na(+)(out). The catalysed reaction is Li(+)(in) = Li(+)(out). It carries out the reaction Cs(+)(in) = Cs(+)(out). With respect to regulation, may be operated by a phosphatidylinositol second messenger system activated by receptor tyrosine kinases or G-protein coupled receptors. May be activated by intracellular calcium store depletion. Inhibited by xanthine-based inhibitor Pico145. Its function is as follows. Forms a receptor-activated non-selective calcium permeant cation channel. Acts as a cell-cell contact-dependent endothelial calcium entry channel. Forms a homomeric ion channel or a heteromeric ion channel with TRPC1; the heteromeric ion channel has reduced calcium permeability compared to the homomeric channel. Also permeable to monovalent ions including sodium, lithium and cesium ions. Functionally, forms a receptor-activated non-selective calcium permeant cation channel. This chain is Short transient receptor potential channel 4 (TRPC4), found in Homo sapiens (Human).